The sequence spans 379 residues: Lactosylceramide 1,3-N-acetyl-beta-D-glucosaminyltransferase A (379 aa).

The Cytoplasmic portion of the chain corresponds to 1-12; that stretch reads MFMNCRRVKKWH. A helical; Signal-anchor for type II membrane protein transmembrane segment spans residues 13–30; that stretch reads FLQLLSMCCVMSVLMVCW. At 31 to 379 the chain is on the lumenal side; it reads EHVDHHVVSH…NTYSCMAAFT (349 aa). N-linked (GlcNAc...) asparagine glycosylation is found at Asn57, Asn113, Asn168, and Asn277.

The protein belongs to the glycosyltransferase 31 family.

It is found in the golgi apparatus membrane. The catalysed reaction is a beta-D-Gal-(1-&gt;4)-beta-D-Glc-(1&lt;-&gt;1)-Cer(d18:1(4E)) + UDP-N-acetyl-alpha-D-glucosamine = a beta-D-GlcNAc-(1-&gt;3)-beta-D-Gal-(1-&gt;4)-beta-D-Glc-(1&lt;-&gt;1)-Cer(d18:1(4E)) + UDP + H(+). It catalyses the reaction a neolactoside nLc4Cer(d18:1(4E)) + UDP-N-acetyl-alpha-D-glucosamine = a neolactoside IV(3)-beta-GlcNAc-nLc4Cer(d18:1(4E)) + UDP + H(+). The protein operates within protein modification; protein glycosylation. In terms of biological role, beta-1,3-N-acetylglucosaminyltransferase that plays a key role in the synthesis of lacto- or neolacto-series carbohydrate chains on glycolipids. The chain is Lactosylceramide 1,3-N-acetyl-beta-D-glucosaminyltransferase A (b3gnt5a) from Danio rerio (Zebrafish).